The primary structure comprises 377 residues: Chaperone protein DnaJ (377 aa).

The J domain maps to 5 to 70 (DYYEILGVSK…QKRAAYDQYG (66 aa)). The CR-type zinc finger occupies 132–210 (GVTKEIRIPT…CHGHGRVEKT (79 aa)). Cys-145, Cys-148, Cys-162, Cys-165, Cys-184, Cys-187, Cys-198, and Cys-201 together coordinate Zn(2+). 4 CXXCXGXG motif repeats span residues 145–152 (CDVCHGSG), 162–169 (CPTCHGAG), 184–191 (CPHCQGRG), and 198–205 (CNKCHGHG).

This sequence belongs to the DnaJ family. Homodimer. Requires Zn(2+) as cofactor.

Its subcellular location is the cytoplasm. In terms of biological role, participates actively in the response to hyperosmotic and heat shock by preventing the aggregation of stress-denatured proteins and by disaggregating proteins, also in an autonomous, DnaK-independent fashion. Unfolded proteins bind initially to DnaJ; upon interaction with the DnaJ-bound protein, DnaK hydrolyzes its bound ATP, resulting in the formation of a stable complex. GrpE releases ADP from DnaK; ATP binding to DnaK triggers the release of the substrate protein, thus completing the reaction cycle. Several rounds of ATP-dependent interactions between DnaJ, DnaK and GrpE are required for fully efficient folding. Also involved, together with DnaK and GrpE, in the DNA replication of plasmids through activation of initiation proteins. This chain is Chaperone protein DnaJ, found in Klebsiella pneumoniae (strain 342).